The sequence spans 160 residues: Large ribosomal subunit protein uL16 (160 aa).

The tract at residues 138-160 (KNLENSSQENTKDSKKSQEEVKQ) is disordered. A compositionally biased stretch (basic and acidic residues) spans 147–160 (NTKDSKKSQEEVKQ).

This sequence belongs to the universal ribosomal protein uL16 family. Part of the 50S ribosomal subunit.

Its function is as follows. Binds 23S rRNA and is also seen to make contacts with the A and possibly P site tRNAs. The polypeptide is Large ribosomal subunit protein uL16 (Prochlorococcus marinus (strain AS9601)).